A 274-amino-acid chain; its full sequence is MAIHLYKTSTPSTRNGAVDSQVKSNPRNNLIYGQHHCGKGRNARGIITVRHRGGGHKRLYRKIDFRRNAKDIYGRIVTIEYDPNRNAYICLIHYGDGEKRYILHPRGAIIGDTIVSGTEVPIKMGNALPLTDMPLGTAIHNIEITLGKGGQLARAAGAVAKLIAKEGKSATLKLPSGEVRLISKNCSATVGQVGNVGVNQKSLGRAGSKCWLGKRPVVRGVVMNPVDHPHGGGEGRAPIGRKKPVTPWGYPALGRRTRKRKKYSETMILRRRSK.

2 disordered regions span residues 1 to 22 and 225 to 252; these read MAIH…DSQV and PVDH…GYPA.

This sequence belongs to the universal ribosomal protein uL2 family. As to quaternary structure, part of the 50S ribosomal subunit.

The protein localises to the plastid. Its subcellular location is the chloroplast. This chain is Large ribosomal subunit protein uL2cz/uL2cy (rpl2-A), found in Barbarea verna (Land cress).